The primary structure comprises 424 residues: Histidine--tRNA ligase (424 aa).

Belongs to the class-II aminoacyl-tRNA synthetase family. As to quaternary structure, homodimer.

The protein localises to the cytoplasm. It catalyses the reaction tRNA(His) + L-histidine + ATP = L-histidyl-tRNA(His) + AMP + diphosphate + H(+). The protein is Histidine--tRNA ligase of Salmonella heidelberg (strain SL476).